Consider the following 417-residue polypeptide: D-amino acid dehydrogenase (417 aa).

FAD is bound at residue 3-17; that stretch reads IIVLGAGVIGVTSAY.

This sequence belongs to the DadA oxidoreductase family. Requires FAD as cofactor.

The enzyme catalyses a D-alpha-amino acid + A + H2O = a 2-oxocarboxylate + AH2 + NH4(+). The protein operates within amino-acid degradation; D-alanine degradation; NH(3) and pyruvate from D-alanine: step 1/1. In terms of biological role, oxidative deamination of D-amino acids. In Azorhizobium caulinodans (strain ATCC 43989 / DSM 5975 / JCM 20966 / LMG 6465 / NBRC 14845 / NCIMB 13405 / ORS 571), this protein is D-amino acid dehydrogenase.